A 641-amino-acid polypeptide reads, in one-letter code: UvrABC system protein C (641 aa).

The region spanning 16 to 95 (ESPGVYRFWD…IKQYEPRFNI (80 aa)) is the GIY-YIG domain. The UVR domain maps to 208 to 243 (TEYLRRLEKDMRAAAAAEDFERAARLRDDAAALRLA).

It belongs to the UvrC family. In terms of assembly, interacts with UvrB in an incision complex.

The protein resides in the cytoplasm. In terms of biological role, the UvrABC repair system catalyzes the recognition and processing of DNA lesions. UvrC both incises the 5' and 3' sides of the lesion. The N-terminal half is responsible for the 3' incision and the C-terminal half is responsible for the 5' incision. This Acidothermus cellulolyticus (strain ATCC 43068 / DSM 8971 / 11B) protein is UvrABC system protein C.